Here is a 346-residue protein sequence, read N- to C-terminus: Dynein regulatory complex protein 9 (346 aa).

The span at 299–308 (MEKEQREKNA) shows a compositional bias: basic and acidic residues. A disordered region spans residues 299–346 (MEKEQREKNAATKIQAWWRGTLVRKGPRSKKADKSKKKDGKKGKKKRK). Residues 305–334 (EKNAATKIQAWWRGTLVRKGPRSKKADKSK) enclose the IQ domain. Residues 323–346 (KGPRSKKADKSKKKDGKKGKKKRK) are compositionally biased toward basic residues.

This sequence belongs to the DRC9 family. As to quaternary structure, component of the nexin-dynein regulatory complex (N-DRC). Interacts (via IQ domain) with calmodulin when calcium levels are low. Does not interact with calmodulin in the presence of Ca(2+). Interacts with hsp70 and may form a complex with camk4 and hsp70. In terms of tissue distribution, detected in adult testis, and at lower levels in brain, kidney and ovary.

Its subcellular location is the cytoplasm. The protein localises to the cell projection. It is found in the cilium. It localises to the flagellum. The protein resides in the cytoskeleton. Its subcellular location is the flagellum axoneme. Its function is as follows. Component of the nexin-dynein regulatory complex (N-DRC), a key regulator of ciliary/flagellar motility which maintains the alignment and integrity of the distal axoneme and regulates microtubule sliding in motile axonemes. Binds calmodulin when cellular Ca(2+) levels are low and thereby contributes to the regulation of calcium and calmodulin-dependent protein kinase IV (camk4) activity; contributes to the regulation of camk4 signaling cascades. Plays a role in the regulation of definitive hematopoiesis via its effects on camk4. This chain is Dynein regulatory complex protein 9, found in Danio rerio (Zebrafish).